We begin with the raw amino-acid sequence, 298 residues long: ATP synthase gamma chain (298 aa).

The protein belongs to the ATPase gamma chain family. F-type ATPases have 2 components, CF(1) - the catalytic core - and CF(0) - the membrane proton channel. CF(1) has five subunits: alpha(3), beta(3), gamma(1), delta(1), epsilon(1). CF(0) has three main subunits: a, b and c.

The protein resides in the cell inner membrane. Functionally, produces ATP from ADP in the presence of a proton gradient across the membrane. The gamma chain is believed to be important in regulating ATPase activity and the flow of protons through the CF(0) complex. The sequence is that of ATP synthase gamma chain from Desulforapulum autotrophicum (strain ATCC 43914 / DSM 3382 / VKM B-1955 / HRM2) (Desulfobacterium autotrophicum).